Reading from the N-terminus, the 491-residue chain is Probable glycine dehydrogenase (decarboxylating) subunit 2 (491 aa).

Position 273 is an N6-(pyridoxal phosphate)lysine (K273).

The protein belongs to the GcvP family. C-terminal subunit subfamily. The glycine cleavage system is composed of four proteins: P, T, L and H. In this organism, the P 'protein' is a heterodimer of two subunits. The cofactor is pyridoxal 5'-phosphate.

The catalysed reaction is N(6)-[(R)-lipoyl]-L-lysyl-[glycine-cleavage complex H protein] + glycine + H(+) = N(6)-[(R)-S(8)-aminomethyldihydrolipoyl]-L-lysyl-[glycine-cleavage complex H protein] + CO2. Its function is as follows. The glycine cleavage system catalyzes the degradation of glycine. The P protein binds the alpha-amino group of glycine through its pyridoxal phosphate cofactor; CO(2) is released and the remaining methylamine moiety is then transferred to the lipoamide cofactor of the H protein. The sequence is that of Probable glycine dehydrogenase (decarboxylating) subunit 2 from Bacillus cereus (strain G9842).